Reading from the N-terminus, the 196-residue chain is Cilia- and flagella-associated protein 107 (196 aa).

Mn regions lie at residues 47 to 62 (TPQCIYRKEYVPMPDH) and 97 to 109 (ISTYDDHYNRHNY).

As to quaternary structure, microtubule inner protein component of sperm flagellar doublet microtubules.

The protein resides in the cytoplasm. The protein localises to the cytoskeleton. Its subcellular location is the cilium axoneme. It localises to the flagellum axoneme. In terms of biological role, microtubule inner protein (MIP) part of the dynein-decorated doublet microtubules (DMTs) in cilia axoneme, which is required for motile cilia beating. In Mus musculus (Mouse), this protein is Cilia- and flagella-associated protein 107.